We begin with the raw amino-acid sequence, 288 residues long: Probable aquaporin PIP1-2 (288 aa).

The disordered stretch occupies residues 1–37 (MEGKEEDVRLGANKFSERQPIGTAAQGSDDKDYKEPP). Helical transmembrane passes span 57-77 (IAEFMATFLFLYITVLTVMGV) and 92-114 (IAWSFGGMIFALVYCTAGISGGH). Residues 116 to 118 (NPA) carry the NPA 1 motif. Helical transmembrane passes span 135–155 (LFYMVMQCLGAICGAGVVKGF), 177–197 (GDGLGAEIVGTFILVYTVFSA), and 211–231 (ILAPLPIGFAVFLVHLATIPI). Residues 237–239 (NPA) carry the NPA 2 motif. A helical membrane pass occupies residues 259 to 279 (IFWVGPFIGAALAAIYHQVVI).

The protein belongs to the MIP/aquaporin (TC 1.A.8) family. PIP (TC 1.A.8.11) subfamily. Expressed in roots, leaves and anthers.

It localises to the cell membrane. Its function is as follows. Aquaporins facilitate the transport of water and small neutral solutes across cell membranes. This chain is Probable aquaporin PIP1-2 (PIP1-2), found in Oryza sativa subsp. japonica (Rice).